A 189-amino-acid chain; its full sequence is Protein GrpE (189 aa).

Positions 1–38 (MTKSNETERMEESEETHSSDIRSASESDHASGSDHTES) are enriched in basic and acidic residues. The tract at residues 1–54 (MTKSNETERMEESEETHSSDIRSASESDHASGSDHTESADEIPTADAEQGELEQ) is disordered.

The protein belongs to the GrpE family. As to quaternary structure, homodimer.

The protein localises to the cytoplasm. Its function is as follows. Participates actively in the response to hyperosmotic and heat shock by preventing the aggregation of stress-denatured proteins, in association with DnaK and GrpE. It is the nucleotide exchange factor for DnaK and may function as a thermosensor. Unfolded proteins bind initially to DnaJ; upon interaction with the DnaJ-bound protein, DnaK hydrolyzes its bound ATP, resulting in the formation of a stable complex. GrpE releases ADP from DnaK; ATP binding to DnaK triggers the release of the substrate protein, thus completing the reaction cycle. Several rounds of ATP-dependent interactions between DnaJ, DnaK and GrpE are required for fully efficient folding. The protein is Protein GrpE of Tropheryma whipplei (strain Twist) (Whipple's bacillus).